The following is a 191-amino-acid chain: Probable DNA-directed RNA polymerase subunit delta (191 aa).

One can recognise an HTH HARE-type domain in the interval 14–83 (LSMIEVARAI…GENKWGLRSW (70 aa)). Residues 119–191 (EDAIDYRDDD…EDEEDEEPVL (73 aa)) are disordered.

In terms of assembly, RNAP is composed of a core of 2 alpha, a beta and a beta' subunits. The core is associated with a delta subunit and one of several sigma factors.

In terms of biological role, participates in both the initiation and recycling phases of transcription. In the presence of the delta subunit, RNAP displays an increased specificity of transcription, a decreased affinity for nucleic acids, and an increased efficiency of RNA synthesis because of enhanced recycling. In Streptococcus pyogenes serotype M6 (strain ATCC BAA-946 / MGAS10394), this protein is Probable DNA-directed RNA polymerase subunit delta.